The primary structure comprises 801 residues: Mitochondrial intermediate peptidase (801 aa).

The N-terminal 41 residues, 1–41, are a transit peptide targeting the mitochondrion; it reads MKPQLLTPLRRRPWTCRQCLQRLQRLQQQTRRSFETAASPA. A disordered region spans residues 31 to 54; the sequence is RRSFETAASPAPGHTQVDYIPADA. His565 contacts Zn(2+). Residue Glu566 is part of the active site. Positions 569 and 572 each coordinate Zn(2+).

The protein belongs to the peptidase M3 family. Zn(2+) is required as a cofactor.

The protein localises to the mitochondrion matrix. The catalysed reaction is Release of an N-terminal octapeptide as second stage of processing of some proteins imported into the mitochondrion.. Functionally, cleaves proteins, imported into the mitochondrion, to their mature size. While most mitochondrial precursor proteins are processed to the mature form in one step by mitochondrial processing peptidase (MPP), the sequential cleavage by MIP of an octapeptide after initial processing by MPP is a required step for a subgroup of nuclear-encoded precursor proteins destined for the matrix or the inner membrane. In Aspergillus clavatus (strain ATCC 1007 / CBS 513.65 / DSM 816 / NCTC 3887 / NRRL 1 / QM 1276 / 107), this protein is Mitochondrial intermediate peptidase (oct1).